The primary structure comprises 141 residues: Plasmatocyte-spreading peptide (141 aa).

An N-terminal signal peptide occupies residues 1-22; sequence MKLTINILFCLILISQYNSANG. The propeptide occupies 23-118; the sequence is NLRDLFNNVR…ATGGKDDKGR (96 aa). Positions 46-58 are enriched in basic and acidic residues; that stretch reads VKTLFHPSDKSGN. The disordered stretch occupies residues 46–118; it reads VKTLFHPSDK…ATGGKDDKGR (73 aa). Residues 83-98 show a composition bias toward low complexity; the sequence is PVAVTPAPVVSTTTQA. Over residues 99–108 the composition is skewed to polar residues; that stretch reads SAPTVATNGT. A disulfide bridge connects residues Cys125 and Cys137.

Belongs to the GBP/PSP1/paralytic peptide family.

In terms of biological role, mediates the spreading of plasmatocytes to foreign surfaces. Plasmocytes are a class of hemocytes involved in insect cellular immunity. In Chrysodeixis includens (Soybean looper), this protein is Plasmatocyte-spreading peptide (PSP1).